A 189-amino-acid chain; its full sequence is Guanylate kinase (189 aa).

The region spanning 8-186 (GKLTVITGPS…AVIELESLMG (179 aa)) is the Guanylate kinase-like domain. Position 15–22 (15–22 (GPSGVGKG)) interacts with ATP.

The protein belongs to the guanylate kinase family.

The protein resides in the cytoplasm. It catalyses the reaction GMP + ATP = GDP + ADP. Its function is as follows. Essential for recycling GMP and indirectly, cGMP. This Prochlorococcus marinus (strain MIT 9313) protein is Guanylate kinase.